The chain runs to 150 residues: 6,7-dimethyl-8-ribityllumazine synthase (150 aa).

Residues phenylalanine 11, 42-44 (IFE), and 73-75 (CAI) each bind 5-amino-6-(D-ribitylamino)uracil. 78–79 (ES) lines the (2S)-2-hydroxy-3-oxobutyl phosphate pocket. The Proton donor role is filled by histidine 81. Residue asparagine 106 coordinates 5-amino-6-(D-ribitylamino)uracil. A (2S)-2-hydroxy-3-oxobutyl phosphate-binding site is contributed by arginine 120.

It belongs to the DMRL synthase family.

The catalysed reaction is (2S)-2-hydroxy-3-oxobutyl phosphate + 5-amino-6-(D-ribitylamino)uracil = 6,7-dimethyl-8-(1-D-ribityl)lumazine + phosphate + 2 H2O + H(+). Its pathway is cofactor biosynthesis; riboflavin biosynthesis; riboflavin from 2-hydroxy-3-oxobutyl phosphate and 5-amino-6-(D-ribitylamino)uracil: step 1/2. Its function is as follows. Catalyzes the formation of 6,7-dimethyl-8-ribityllumazine by condensation of 5-amino-6-(D-ribitylamino)uracil with 3,4-dihydroxy-2-butanone 4-phosphate. This is the penultimate step in the biosynthesis of riboflavin. In Paramagnetospirillum magneticum (strain ATCC 700264 / AMB-1) (Magnetospirillum magneticum), this protein is 6,7-dimethyl-8-ribityllumazine synthase.